Here is a 422-residue protein sequence, read N- to C-terminus: Zinc finger protein Gfi-1 (422 aa).

Residues 1-20 (MPRSFLVKSKKAHSYHQPRS) form an SNAG domain region. Positions 1–107 (MPRSFLVKSK…SPASEKSVCP (107 aa)) are disordered. Phosphoserine is present on S20. Residues 34-47 (APGGADGTSSAGGA) are compositionally biased toward low complexity. S56 carries the post-translational modification Phosphoserine. Positions 57–72 (PESQLTEAPDRSSASP) are enriched in polar residues. A required for interaction with RELA region spans residues 140–257 (RPCAALDRGA…LLLGGGSYKC (118 aa)). C2H2-type zinc fingers lie at residues 255-278 (YKCI…RRSH), 284-306 (FACE…KAVH), 312-334 (FDCK…LLIH), 340-362 (YPCQ…TFIH), 368-390 (HKCQ…SRKH), and 396-419 (FGCD…ETQH).

Interacts with U2AF1L4. Component of RCOR-GFI-KDM1A-HDAC complexes. Interacts directly with RCOR1, KDM1A and HDAC2. Also interacts with HDAC1 and HDAC3. Interacts (via the zinc-finger domain) with ARIH2; the interaction prevents GFI1 ubiquitination and proteasomal degradation. Interacts with PIAS3; the interaction relieves the inhibitory effect of PIAS3 on STAT3-mediated transcriptional activity. Forms a complex with EHMT2 and HDAC1 to promote 'Lys-9' dimethylation of H3 (H3K9Me2) and repress expression of target genes. Interacts directly with EHMT2. Component of the GFI1-AJUBA-HDAC1 repressor complex. Interacts directly with AJUBA (via ITS LIM domains); the interaction results in the HDAC-dependent corepression of a subset of GFI1 target genes and, occurs independently of the SNAG domain. Interacts with SPI1; the interaction inhibits SPI1 transcriptional activity targeted at macrophage-specific genes, repressing macrophage differentiation of myeloid progenitor cells and promoting granulocyte commitment. Interacts with RUNX1T1; the interaction represses HDAC-mediated transcriptional activity. Interacts with RELA; the interaction occurs on liposaccharide (LPS) stimulation and controls RELA DNA binding activity and regulates endotoxin-mediated TOLL-like receptor inflammatory response. Interacts (via the C-terminal zinc fingers) with ZBTB17; the interaction results in the recruitment of GFI1 to the CDKN1A/p21 and CDKNIB promoters and repression of transcription. In terms of processing, ubiquitinated.

Its subcellular location is the nucleus. Its function is as follows. Transcription repressor essential for hematopoiesis. Functions in a cell-context and development-specific manner. Binds to 5'-TAAATCAC[AT]GCA-3' in the promoter region of a large number of genes. Component of several complexes, including the EHMT2-GFI1-HDAC1, AJUBA-GFI1-HDAC1 and RCOR-GFI-KDM1A-HDAC complexes, that suppress, via histone deacetylase (HDAC) recruitment, a number of genes implicated in multilineage blood cell development. Regulates neutrophil differentiation, promotes proliferation of lymphoid cells, and is required for granulocyte development. Inhibits SPI1 transcriptional activity at macrophage-specific genes, repressing macrophage differentiation of myeloid progenitor cells and promoting granulocyte commitment. Mediates, together with U2AF1L4, the alternative splicing of CD45 and controls T-cell receptor signaling. Regulates the endotoxin-mediated Toll-like receptor (TLR) inflammatory response by antagonizing RELA. Cooperates with CBFA2T2 to regulate ITGB1-dependent neurite growth. Controls cell-cycle progression by repressing CDKNIA/p21 transcription in response to TGFB1 via recruitment of GFI1 by ZBTB17 to the CDKNIA/p21 and CDKNIB promoters. Required for the maintenance of inner ear hair cells. In addition to its role in transcription, acts as a substrate adapter for PRMT1 in the DNA damage response: facilitates the recognition of TP53BP1 and MRE11 substrates by PRMT1, promoting their methylation and the DNA damage response. The protein is Zinc finger protein Gfi-1 (GFI1) of Canis lupus familiaris (Dog).